The following is an 806-amino-acid chain: Leucine--tRNA ligase (806 aa).

The short motif at 54 to 64 is the 'HIGH' region element; sequence SYPSGDLHMGH. Positions 571–575 match the 'KMSKS' region motif; sequence KMSKS. Position 574 (Lys-574) interacts with ATP.

Belongs to the class-I aminoacyl-tRNA synthetase family.

The protein resides in the cytoplasm. It catalyses the reaction tRNA(Leu) + L-leucine + ATP = L-leucyl-tRNA(Leu) + AMP + diphosphate. This chain is Leucine--tRNA ligase, found in Tropheryma whipplei (strain Twist) (Whipple's bacillus).